The chain runs to 447 residues: NADH-ubiquinone oxidoreductase chain 4 (447 aa).

The next 13 membrane-spanning stretches (helical) occupy residues 28 to 48 (IFLA…FCDI), 56 to 76 (MISY…LMAS), 85 to 105 (YVNL…FTFS), 110 to 130 (FMFY…ILGW), 141 to 161 (IYLL…IFYI), 183 to 203 (FLYL…LVHL), 213 to 233 (PVSG…YGLL), 246 to 266 (FNYI…LICL), 273 to 293 (ALIA…LMTM), 301 to 321 (SYTL…LANI), 343 to 365 (SLSL…LNLL), 380 to 400 (LTMI…LYLF), and 409 to 431 (YSGV…LHWL).

This sequence belongs to the complex I subunit 4 family.

The protein resides in the mitochondrion membrane. It carries out the reaction a ubiquinone + NADH + 5 H(+)(in) = a ubiquinol + NAD(+) + 4 H(+)(out). Core subunit of the mitochondrial membrane respiratory chain NADH dehydrogenase (Complex I) that is believed to belong to the minimal assembly required for catalysis. Complex I functions in the transfer of electrons from NADH to the respiratory chain. The immediate electron acceptor for the enzyme is believed to be ubiquinone. This chain is NADH-ubiquinone oxidoreductase chain 4, found in Aedes aegypti (Yellowfever mosquito).